Reading from the N-terminus, the 103-residue chain is MYAVIQSGGKQHRVVEGETLKVELLKAESGATITFDDVLMVVNGDNIQIGAPVVAGAKVTAEVIGHGRHDKIRIIKMRRRKHYRKQQGHRQWFTELKITGISG.

The protein belongs to the bacterial ribosomal protein bL21 family. Part of the 50S ribosomal subunit. Contacts protein L20.

Its function is as follows. This protein binds to 23S rRNA in the presence of protein L20. This Acinetobacter baumannii (strain AB307-0294) protein is Large ribosomal subunit protein bL21.